A 53-amino-acid chain; its full sequence is Conotoxin Cal9.2e (53 aa).

Residues 1–6 (KKGVTQ) constitute a propeptide that is removed on maturation. Disulfide bonds link C15/C32, C20/C42, and C22/C47.

Expressed by the venom duct.

The protein resides in the secreted. In terms of biological role, probable neurotoxin with unknown target. Possibly targets ion channels. This is Conotoxin Cal9.2e from Californiconus californicus (California cone).